The primary structure comprises 502 residues: Probable malate:quinone oxidoreductase (502 aa).

It belongs to the MQO family. The cofactor is FAD.

It carries out the reaction (S)-malate + a quinone = a quinol + oxaloacetate. Its pathway is carbohydrate metabolism; tricarboxylic acid cycle; oxaloacetate from (S)-malate (quinone route): step 1/1. This is Probable malate:quinone oxidoreductase from Synechococcus sp. (strain CC9605).